Here is a 204-residue protein sequence, read N- to C-terminus: Large ribosomal subunit protein eL15A (204 aa).

Positions 164 to 185 (LTATGKKSRGINKGHKFNNTKA) are disordered. The span at 169–185 (KKSRGINKGHKFNNTKA) shows a compositional bias: basic residues.

This sequence belongs to the eukaryotic ribosomal protein eL15 family. Component of the large ribosomal subunit (LSU). Mature yeast ribosomes consist of a small (40S) and a large (60S) subunit. The 40S small subunit contains 1 molecule of ribosomal RNA (18S rRNA) and 33 different proteins (encoded by 57 genes). The large 60S subunit contains 3 rRNA molecules (25S, 5.8S and 5S rRNA) and 46 different proteins (encoded by 81 genes).

It localises to the cytoplasm. In terms of biological role, component of the ribosome, a large ribonucleoprotein complex responsible for the synthesis of proteins in the cell. The small ribosomal subunit (SSU) binds messenger RNAs (mRNAs) and translates the encoded message by selecting cognate aminoacyl-transfer RNA (tRNA) molecules. The large subunit (LSU) contains the ribosomal catalytic site termed the peptidyl transferase center (PTC), which catalyzes the formation of peptide bonds, thereby polymerizing the amino acids delivered by tRNAs into a polypeptide chain. The nascent polypeptides leave the ribosome through a tunnel in the LSU and interact with protein factors that function in enzymatic processing, targeting, and the membrane insertion of nascent chains at the exit of the ribosomal tunnel. This chain is Large ribosomal subunit protein eL15A, found in Saccharomyces cerevisiae (strain ATCC 204508 / S288c) (Baker's yeast).